Consider the following 180-residue polypeptide: Translation initiation factor IF-3 (180 aa).

This sequence belongs to the IF-3 family. In terms of assembly, monomer.

It localises to the cytoplasm. Functionally, IF-3 binds to the 30S ribosomal subunit and shifts the equilibrium between 70S ribosomes and their 50S and 30S subunits in favor of the free subunits, thus enhancing the availability of 30S subunits on which protein synthesis initiation begins. The chain is Translation initiation factor IF-3 from Pasteurella multocida (strain Pm70).